A 527-amino-acid polypeptide reads, in one-letter code: MGKYHSFVNVVALSLSLSGRVFGAIGPVTDLTISNADVTPDGITRAAVLAGGVFPGPLITGNKGDEFQINVIDNLTNETMLKSTTIHWHGIFQAGTNWADGAAFVNQCPIATGNSFLYDFTVPDQAGTFWYHSHLSTQYCDGLRGPLVVYDPDDPNASLYDVDDDTTVITLADWYHTAAKLGPAFPAGPDSVLINGLGRFSGDGGGATNLTVITVTQGKRYRFRLVSISCDPNFTFSIDGHNMTIIEVDGVNHEALDVDSIQIFAGQRYSFILNANQSIDNYWIRAIPNTGTTDTTGGVNSAILRYDTAEDIEPTTNATTSVIPLTETDLVPLDNPAAPGDPQVGGVDLAMSLDFSFNGSNFFINNETFVPPTVPVLLQILSGAQDAASLLPNGSVYTLPSNSTIEISFPIITTDGVLNAPGAPHPFHLHGHTFSVVRSAGSSTFNYANPVRRDTVSTGNSGDNVTIRFTTDNPGPWFLHCHIDFHLEAGFAIVWGEDTADTASANPVPTAWSDLCPTYDALDSSDL.

The N-terminal stretch at 1–23 (MGKYHSFVNVVALSLSLSGRVFG) is a signal peptide. Residues 25 to 150 (IGPVTDLTIS…DGLRGPLVVY (126 aa)) enclose the Plastocyanin-like 1 domain. Residues N74 and N77 are each glycosylated (N-linked (GlcNAc...) asparagine). Cu cation is bound by residues H87, H89, H132, and H134. Intrachain disulfides connect C108–C516 and C140–C230. N-linked (GlcNAc...) asparagine glycans are attached at residues N156, N209, N233, N242, N276, N317, N358, N366, N393, and N402. The region spanning 162–306 (VDDDTTVITL…GGVNSAILRY (145 aa)) is the Plastocyanin-like 2 domain. Residues 373–498 (TVPVLLQILS…AGFAIVWGED (126 aa)) form the Plastocyanin-like 3 domain. The Cu cation site is built by H425, H428, H430, H480, C481, H482, and H486.

Belongs to the multicopper oxidase family. In terms of assembly, homodimer. The cofactor is Cu cation.

The protein localises to the secreted. It carries out the reaction 4 hydroquinone + O2 = 4 benzosemiquinone + 2 H2O. Lignin degradation and detoxification of lignin-derived products. This chain is Laccase-5 (LCC5), found in Trametes villosa (White-rot fungus).